Consider the following 444-residue polypeptide: Putative permease IIC component YwbA (444 aa).

One can recognise a PTS EIIC type-3 domain in the interval 8–421 (MEEKIMPVAG…LITCAIYYPF (414 aa)). A run of 10 helical transmembrane segments spans residues 31–51 (GIILTMPLIIIGSVFLILTSL), 72–92 (LGYPVNASFDIMAMIAAFGIA), 104–124 (LSAGAISIAAFLLATPFEVPF), 138–158 (GIPITLLGSKGLFVAMLIALF), 187–207 (FVALIPGFIIVLLVWLARLLI), 223–243 (LGTPLSILGGSLGGSLIAEFV), 246–266 (LLWSCGIHGASIIGGIMAPIW), 291–311 (FFQIWINVGGSGATLALVLTM), 349–371 (PLLIVPFIIAPLLTITATYIGMS), and 402–422 (SGAVMQLVNLLITCAIYYPFF).

The protein resides in the cell membrane. The phosphoenolpyruvate-dependent sugar phosphotransferase system (PTS), a major carbohydrate active -transport system, catalyzes the phosphorylation of incoming sugar substrates concomitant with their translocation across the cell membrane. The protein is Putative permease IIC component YwbA (ywbA) of Bacillus subtilis (strain 168).